The chain runs to 515 residues: Pisatin demethylase (515 aa).

A heme-binding site is contributed by Cys453.

This sequence belongs to the cytochrome P450 family. Requires heme as cofactor.

Functionally, can detoxify the phytoalexin pisatin from garden pea. Pisatin is an antimicrobial compound produced by pea in response to infection by plant pathogens. The protein is Pisatin demethylase (PDAT9) of Fusarium vanettenii (Neocosmospora pisi).